Reading from the N-terminus, the 74-residue chain is Small ribosomal subunit protein uS15 (74 aa).

Belongs to the universal ribosomal protein uS15 family. As to quaternary structure, part of the 30S ribosomal subunit. Forms a bridge to the 50S subunit in the 70S ribosome, contacting the 23S rRNA.

Its function is as follows. One of the primary rRNA binding proteins, it binds directly to 16S rRNA where it helps nucleate assembly of the platform of the 30S subunit by binding and bridging several RNA helices of the 16S rRNA. Functionally, forms an intersubunit bridge (bridge B4) with the 23S rRNA of the 50S subunit in the ribosome. The protein is Small ribosomal subunit protein uS15 of Aster yellows witches'-broom phytoplasma (strain AYWB).